We begin with the raw amino-acid sequence, 670 residues long: UvrABC system protein B (670 aa).

The 158-residue stretch at 26–183 folds into the Helicase ATP-binding domain; the sequence is EGLEDGLAHQ…RRLAELQYAR (158 aa). 39–46 serves as a coordination point for ATP; sequence GVTGSGKT. A Beta-hairpin motif is present at residues 92–115; it reads YYDYYQPEAYVPSSDTFIEKDAAV. The Helicase C-terminal domain occupies 431–597; that stretch reads QVDDLLSEIR…GLNKKVSDVL (167 aa). The UVR domain occupies 630–665; the sequence is DQKIRELEAQMYTHAQNLEFELAAGLRDEIHQLREQ.

The protein belongs to the UvrB family. Forms a heterotetramer with UvrA during the search for lesions. Interacts with UvrC in an incision complex.

Its subcellular location is the cytoplasm. The UvrABC repair system catalyzes the recognition and processing of DNA lesions. A damage recognition complex composed of 2 UvrA and 2 UvrB subunits scans DNA for abnormalities. Upon binding of the UvrA(2)B(2) complex to a putative damaged site, the DNA wraps around one UvrB monomer. DNA wrap is dependent on ATP binding by UvrB and probably causes local melting of the DNA helix, facilitating insertion of UvrB beta-hairpin between the DNA strands. Then UvrB probes one DNA strand for the presence of a lesion. If a lesion is found the UvrA subunits dissociate and the UvrB-DNA preincision complex is formed. This complex is subsequently bound by UvrC and the second UvrB is released. If no lesion is found, the DNA wraps around the other UvrB subunit that will check the other stand for damage. The protein is UvrABC system protein B of Serratia proteamaculans (strain 568).